Consider the following 227-residue polypeptide: Phosphoglycolate phosphatase (227 aa).

The active-site Nucleophile is Asp-8. Residues Asp-8 and Asp-10 each coordinate Mg(2+). A substrate-binding site is contributed by Lys-150. Mg(2+) is bound by residues Asp-173 and Asp-177.

The protein belongs to the archaeal SPP-like hydrolase family. Mg(2+) serves as cofactor.

It carries out the reaction 2-phosphoglycolate + H2O = glycolate + phosphate. In terms of biological role, catalyzes the dephosphorylation of 2-phosphoglycolate. This chain is Phosphoglycolate phosphatase, found in Sulfolobus acidocaldarius (strain ATCC 33909 / DSM 639 / JCM 8929 / NBRC 15157 / NCIMB 11770).